The primary structure comprises 525 residues: GMP synthase [glutamine-hydrolyzing] (525 aa).

A Glutamine amidotransferase type-1 domain is found at 16–205 (PVLVVDFGAQ…LHDFAGIGAR (190 aa)). Residue C93 is the Nucleophile of the active site. Catalysis depends on residues H179 and E181. Residues 206-399 (WTPANIANAL…LGLPEEIVAR (194 aa)) form the GMPS ATP-PPase domain. 233-239 (SGGVDSA) serves as a coordination point for ATP.

Homodimer.

It catalyses the reaction XMP + L-glutamine + ATP + H2O = GMP + L-glutamate + AMP + diphosphate + 2 H(+). Its pathway is purine metabolism; GMP biosynthesis; GMP from XMP (L-Gln route): step 1/1. Its function is as follows. Catalyzes the synthesis of GMP from XMP. The protein is GMP synthase [glutamine-hydrolyzing] of Mycobacterium marinum (strain ATCC BAA-535 / M).